Here is a 623-residue protein sequence, read N- to C-terminus: Leucine aminopeptidase 2 (623 aa).

A peptide contacts are provided by residues 140–142 (QLE) and 266–271 (PYGGME). Position 295 (histidine 295) interacts with Zn(2+). The active-site Proton acceptor is glutamate 296. Zn(2+) contacts are provided by histidine 299 and glutamate 318. Tyrosine 382 acts as the Proton donor in catalysis.

Belongs to the peptidase M1 family. Zn(2+) serves as cofactor.

The protein resides in the cytoplasm. It is found in the nucleus. The enzyme catalyses an epoxide + H2O = an ethanediol. Its function is as follows. Aminopeptidase that preferentially cleaves di- and tripeptides. Also has low epoxide hydrolase activity (in vitro). Can hydrolyze the epoxide leukotriene LTA(4) but it forms preferentially 5,6-dihydroxy-7,9,11,14-eicosatetraenoic acid rather than the cytokine leukotriene B(4) as the product compared to the homologous mammalian enzyme (in vitro). This Eremothecium gossypii (strain ATCC 10895 / CBS 109.51 / FGSC 9923 / NRRL Y-1056) (Yeast) protein is Leucine aminopeptidase 2.